The following is a 192-amino-acid chain: Phosphoheptose isomerase (192 aa).

Residues 34 to 192 enclose the SIS domain; it reads LADALGNGKK…LEKRLFGERR (159 aa). Position 49 to 51 (49 to 51) interacts with substrate; sequence NGG. Residues H58 and E62 each coordinate Zn(2+). Substrate-binding positions include E62, 91 to 92, 117 to 119, S122, and Q169; these read ND and STS. Zn(2+) contacts are provided by Q169 and H177.

Belongs to the SIS family. GmhA subfamily. Homotetramer. Requires Zn(2+) as cofactor.

It is found in the cytoplasm. The enzyme catalyses 2 D-sedoheptulose 7-phosphate = D-glycero-alpha-D-manno-heptose 7-phosphate + D-glycero-beta-D-manno-heptose 7-phosphate. The protein operates within carbohydrate biosynthesis; D-glycero-D-manno-heptose 7-phosphate biosynthesis; D-glycero-alpha-D-manno-heptose 7-phosphate and D-glycero-beta-D-manno-heptose 7-phosphate from sedoheptulose 7-phosphate: step 1/1. Functionally, catalyzes the isomerization of sedoheptulose 7-phosphate in D-glycero-D-manno-heptose 7-phosphate. This chain is Phosphoheptose isomerase, found in Geotalea daltonii (strain DSM 22248 / JCM 15807 / FRC-32) (Geobacter daltonii).